The sequence spans 288 residues: Diaminopimelate epimerase (288 aa).

Substrate-binding residues include Asn14 and Asn67. Cys76 serves as the catalytic Proton donor. Substrate contacts are provided by residues 77–78 (GN), Asn166, Asn199, and 217–218 (ER). The Proton acceptor role is filled by Cys226. Residue 227–228 (GT) participates in substrate binding.

The protein belongs to the diaminopimelate epimerase family. Homodimer.

It is found in the cytoplasm. It carries out the reaction (2S,6S)-2,6-diaminopimelate = meso-2,6-diaminopimelate. It functions in the pathway amino-acid biosynthesis; L-lysine biosynthesis via DAP pathway; DL-2,6-diaminopimelate from LL-2,6-diaminopimelate: step 1/1. Its function is as follows. Catalyzes the stereoinversion of LL-2,6-diaminopimelate (L,L-DAP) to meso-diaminopimelate (meso-DAP), a precursor of L-lysine and an essential component of the bacterial peptidoglycan. The protein is Diaminopimelate epimerase of Bacillus thuringiensis (strain Al Hakam).